Consider the following 375-residue polypeptide: Trans-enoyl reductase cghC (375 aa).

48-51 (VDTK) lines the NADP(+) pocket. Substrate is bound at residue 135–142 (NAWYTSGW). NADP(+) contacts are provided by residues 188–191 (SSST), 211–214 (SARN), and 276–277 (LD). A substrate-binding site is contributed by 297 to 301 (GPELV). An NADP(+)-binding site is contributed by 366–367 (VS).

The protein belongs to the zinc-containing alcohol dehydrogenase family. Monomer.

The catalysed reaction is (2S,4S)-4-hydroxy-4-methylglutamate + 8 malonyl-CoA + 3 S-adenosyl-L-methionine + ATP + 8 NADPH + 11 H(+) = (2S)-3-[(2S)-3,5-dioxo-4-[(2E,4R,6R,8E,10E,12E)-4,6,12-trimethyltetradeca-2,8,10,12-tetraenoyl]pyrrolidin-2-yl]-2-hydroxy-2-methylpropanoate + AMP + 3 S-adenosyl-L-homocysteine + 8 CO2 + diphosphate + 8 NADP(+) + 8 CoA + 6 H2O. The protein operates within secondary metabolite biosynthesis. Functionally, trans-enoyl reductase; part of the gene cluster that mediates the biosynthesis of the tetramic acid Sch210972, a potential anti-HIV fungal natural product that contains a decalin core. The PKS module of cghG together with the enoylreductase cghC catalyze the formation of the polyketide unit which is then conjugated to 4-hydroxyl-4-methyl glutamate (HMG) by the condensation domain of the cghG NRPS module. One unique structural feature of Sch210972 is the tetramic acid motif proposed to be derived from the non-proteinogenic amino acid HMG, by a Dieckmann-type condensation catalyzed by the reductase domain of cghG. The aldolase cghB catalyzes the aldol condensation of 2 molecules of pyruvic acid to yield the intermediate 4-hydroxyl-4-methyl-2-oxoglutarate (HMOG), which can then be stereoselectively transaminated by an unidentified enzyme to form HMG. The Diels-Alderase cghA then uses the Dieckmann product released by cghG as substrate and catalyzes the Diels-Alder cycloaddition to form the decalin ring of Sch210972. CghA also suppresses the nonenzymatic formation of the alternative stereoisomer. The sequence is that of Trans-enoyl reductase cghC from Chaetomium globosum (strain ATCC 6205 / CBS 148.51 / DSM 1962 / NBRC 6347 / NRRL 1970) (Soil fungus).